The following is a 483-amino-acid chain: UDP-N-acetylmuramate--L-alanine ligase (483 aa).

112–118 is a binding site for ATP; the sequence is GTHGKTT.

Belongs to the MurCDEF family.

It is found in the cytoplasm. It catalyses the reaction UDP-N-acetyl-alpha-D-muramate + L-alanine + ATP = UDP-N-acetyl-alpha-D-muramoyl-L-alanine + ADP + phosphate + H(+). The protein operates within cell wall biogenesis; peptidoglycan biosynthesis. Functionally, cell wall formation. The polypeptide is UDP-N-acetylmuramate--L-alanine ligase (Ralstonia nicotianae (strain ATCC BAA-1114 / GMI1000) (Ralstonia solanacearum)).